The primary structure comprises 522 residues: Terpineol synthase, chloroplastic (522 aa).

(2E)-geranyl diphosphate is bound by residues R242, D279, D283, R414, and N417. Mg(2+) is bound by residues D279 and D283. The DDXXD motif signature appears at 279–283; sequence DDVYD. Mg(2+) contacts are provided by N417, T421, and E425.

Belongs to the terpene synthase family. Tpsb subfamily. In terms of assembly, monomer. The cofactor is Mg(2+). Requires Mn(2+) as cofactor. In terms of tissue distribution, confined to flowers.

The protein resides in the plastid. The protein localises to the chloroplast. It carries out the reaction (2E)-geranyl diphosphate + H2O = (S)-alpha-terpineol + diphosphate. It catalyses the reaction (2E)-geranyl diphosphate = sabinene + diphosphate. The enzyme catalyses (2E)-geranyl diphosphate = beta-myrcene + diphosphate. The catalysed reaction is (2E)-geranyl diphosphate = limonene + diphosphate. It carries out the reaction (2E)-geranyl diphosphate + H2O = 1,8-cineole + diphosphate. It catalyses the reaction (2E)-geranyl diphosphate = alpha-pinene + diphosphate. It participates in secondary metabolite biosynthesis; terpenoid biosynthesis. Its function is as follows. Monoterpene synthase (TPS) involved in the biosynthesis of monoterpene natural products of the 'cineole cassette', volatile compounds present in floral scent. Catalyzes the conversion of (2E)-geranyl diphosphate (GPP) into alpha-terpineol and, as minor products, sabinene, beta-myrcene, limonene, alpha-pinene and 1,8-cineole. This Nicotiana langsdorffii (Langsdorff's tobacco) protein is Terpineol synthase, chloroplastic.